A 42-amino-acid chain; its full sequence is Beta-2-microglobulin (42 aa).

The Ig-like C1-type domain maps to 5 to 42 (PKIQVYSRHPAZBGKPBFLBCYVSGFHPXZIZIBLLKB).

Heterodimer of an alpha chain and a beta chain. Beta-2-microglobulin is the beta-chain of major histocompatibility complex class I molecules.

The protein resides in the secreted. Its function is as follows. Component of the class I major histocompatibility complex (MHC). Involved in the presentation of peptide antigens to the immune system. The chain is Beta-2-microglobulin (B2M) from Canis lupus familiaris (Dog).